An 800-amino-acid chain; its full sequence is Phenylalanine--tRNA ligase beta subunit (800 aa).

The 116-residue stretch at 39-154 (TKDIKNLVVG…EAQVPGTDAL (116 aa)) folds into the tRNA-binding domain. Residues 408-483 (AFITPIDITA…RIYGYDDIPS (76 aa)) form the B5 domain. 4 residues coordinate Mg(2+): Asp461, Asp467, Glu470, and Glu471. The FDX-ACB domain occupies 708 to 800 (PRFPGMSRDI…ALIEQGAVIR (93 aa)).

The protein belongs to the phenylalanyl-tRNA synthetase beta subunit family. Type 1 subfamily. As to quaternary structure, tetramer of two alpha and two beta subunits. Requires Mg(2+) as cofactor.

It localises to the cytoplasm. It catalyses the reaction tRNA(Phe) + L-phenylalanine + ATP = L-phenylalanyl-tRNA(Phe) + AMP + diphosphate + H(+). The polypeptide is Phenylalanine--tRNA ligase beta subunit (Staphylococcus aureus (strain COL)).